We begin with the raw amino-acid sequence, 333 residues long: Glycerol-3-phosphate dehydrogenase [NAD(P)+] (333 aa).

NADPH-binding residues include W13, K33, and K108. Positions 108 and 138 each coordinate sn-glycerol 3-phosphate. S142 contacts NADPH. The sn-glycerol 3-phosphate site is built by K193, D246, S256, R257, and N258. Residue K193 is the Proton acceptor of the active site. Residue R257 participates in NADPH binding. NADPH contacts are provided by V281 and E283.

The protein belongs to the NAD-dependent glycerol-3-phosphate dehydrogenase family.

It is found in the cytoplasm. It carries out the reaction sn-glycerol 3-phosphate + NAD(+) = dihydroxyacetone phosphate + NADH + H(+). It catalyses the reaction sn-glycerol 3-phosphate + NADP(+) = dihydroxyacetone phosphate + NADPH + H(+). It functions in the pathway membrane lipid metabolism; glycerophospholipid metabolism. In terms of biological role, catalyzes the reduction of the glycolytic intermediate dihydroxyacetone phosphate (DHAP) to sn-glycerol 3-phosphate (G3P), the key precursor for phospholipid synthesis. In Bifidobacterium longum (strain NCC 2705), this protein is Glycerol-3-phosphate dehydrogenase [NAD(P)+].